A 302-amino-acid chain; its full sequence is Vacuolar iron transporter (302 aa).

The Cytoplasmic portion of the chain corresponds to 1 to 70 (MPASGAGYAG…HTNTSSDYVK (70 aa)). A helical transmembrane segment spans residues 71-91 (AVVFGGLDGIVTIFAIVAGCV). The Vacuolar segment spans residues 92–99 (GADLSCSQ). Residues 100–120 (VLMVGLGNLLADAISMGFGEY) form a helical membrane-spanning segment. At 121–211 (VSAAAEKDFV…IKRGLVMFTA (91 aa)) the chain is on the cytoplasmic side. Fe cation contacts are provided by Glu137, Glu140, Glu148, Glu151, Met185, and Glu189. Residues 212-232 (FCFFGLLPLAGFIGWVAAFGL) form a helical membrane-spanning segment. The Vacuolar segment spans residues 233–235 (GAE). A helical transmembrane segment spans residues 236–256 (ADMAFLMACVVSIMTLFILGF). Over 257 to 276 (SKGKFVGQNPTKSACLMAMN) the chain is Cytoplasmic. Residues 277 to 297 (GGCAGTVAYGVGSLLQLVVGA) traverse the membrane as a helical segment. Over 298–302 (NLTAA) the chain is Vacuolar.

It belongs to the CCC1 family.

The protein resides in the vacuole membrane. The enzyme catalyses Fe(2+)(in) = Fe(2+)(out). Vacuolar iron transporter involved in the transfer of iron ions from the cytosol to the vacuole for intracellular iron storage. Plays an essential role in detoxification of excess iron. Important for parasite survival within macrophages and parasite virulence in vivo. The sequence is that of Vacuolar iron transporter from Toxoplasma gondii (strain ATCC 50861 / VEG).